The chain runs to 578 residues: MANAGVNETVAVAVAIDAPGVGHDHGAAGEVRRPSTRRLAPAGSGGRLMAELLGVFNGLTERMGEDVATSSSSRLLFRALKLALPALRDGGGDGGGGQSVSRALVVAASLADLQMDAEVISAGMVRGALDTGALAMADVEAQLGASAAGLVEESLKVKRAPSEVDVADEEAASALRKRCLSSYDIRAVILELAVKLDAMKHLDVLPKHQQRTTSLEVLKVFALLAHAVGAGELSLELEDLSFQRLYPQAYAHIDQWLSSQEDDCKRVIAASKEELLRALTADDELRCTVTGVDVMGRYKSRFSTMKKLVKDGRRPEDVNDILGMRVILDPRPGGGGGGDGDGGDRACLRTHEVIKAMWKDVPARTKDYITRPKGNGYRSLHVAVDMSEPGPEGKKRPLMEIQVRTREMDMAAVGGQASHALYKGGLTDPEEAKRLKAIMLAAAEVAAQHLRDEPAGDGGQTTAAASAATAGNVERAFQLLDKNGDGRISMEELTEIMEDLGAGGHDAEELMRLLDANSDGSLSSDEFALFQKRVKLKTKLENKDDEYKEILKQKLQKVDDTGLIHVYRKNLSDKLVLV.

Residues 1–45 (MANAGVNETVAVAVAIDAPGVGHDHGAAGEVRRPSTRRLAPAGSG) constitute a chloroplast transit peptide. The region spanning 99–199 (SVSRALVVAA…LELAVKLDAM (101 aa)) is the HD domain. EF-hand domains follow at residues 468–503 (ATAG…LGAG) and 506–537 (DAEE…VKLK). Residues Asp481, Asn483, Asp485, Arg487, Glu492, Asp515, Asn517, Asp519, Ser521, and Glu526 each coordinate Ca(2+).

It belongs to the RelA/SpoT family. As to expression, expressed in roots and shoots.

The protein localises to the plastid. It localises to the chloroplast. The catalysed reaction is GTP + ATP = guanosine 3'-diphosphate 5'-triphosphate + AMP. With respect to regulation, activated by calcium. Functionally, possesses calcium-dependent ppGpp (guanosine 3'-diphosphate 5'-diphosphate) synthetase activity in vitro and is able to functionally complement E.coli relA mutants. May be involved in a rapid plant ppGpp-mediated response to pathogens and other stresses. The polypeptide is GTP diphosphokinase CRSH3, chloroplastic (Oryza sativa subsp. japonica (Rice)).